A 106-amino-acid polypeptide reads, in one-letter code: Large ribosomal subunit protein P1A (106 aa).

A disordered region spans residues Ala-74–Asp-106. Over residues Glu-82 to Met-100 the composition is skewed to acidic residues.

Belongs to the eukaryotic ribosomal protein P1/P2 family. As to quaternary structure, component of the large ribosomal subunit (LSU). Mature ribosomes consist of a small (40S) and a large (60S) subunit. The 40S subunit contains about 32 different proteins and 1 molecule of RNA (18S). The 60S subunit contains 45 different proteins and 3 molecules of RNA (25S, 5.8S and 5S). The 5 acidic ribosomal P-proteins form the stalk structure of the 60S subunit. They are organized as a pentameric complex in which uL10/P0 interacts with 2 heterodimers, P1A-P2B and P1B-P2A. In terms of processing, phosphorylated.

It localises to the cytoplasm. Its function is as follows. Component of the ribosome, a large ribonucleoprotein complex responsible for the synthesis of proteins in the cell. The small ribosomal subunit (SSU) binds messenger RNAs (mRNAs) and translates the encoded message by selecting cognate aminoacyl-transfer RNA (tRNA) molecules. The large subunit (LSU) contains the ribosomal catalytic site termed the peptidyl transferase center (PTC), which catalyzes the formation of peptide bonds, thereby polymerizing the amino acids delivered by tRNAs into a polypeptide chain. The nascent polypeptides leave the ribosome through a tunnel in the LSU and interact with protein factors that function in enzymatic processing, targeting, and the membrane insertion of nascent chains at the exit of the ribosomal tunnel. The chain is Large ribosomal subunit protein P1A (RPP1A) from Candida albicans (strain SC5314 / ATCC MYA-2876) (Yeast).